A 284-amino-acid chain; its full sequence is tRNA uridine(34) hydroxylase (284 aa).

Residues aspartate 132–tyrosine 226 enclose the Rhodanese domain. Cysteine 186 (cysteine persulfide intermediate) is an active-site residue.

This sequence belongs to the TrhO family.

It carries out the reaction uridine(34) in tRNA + AH2 + O2 = 5-hydroxyuridine(34) in tRNA + A + H2O. In terms of biological role, catalyzes oxygen-dependent 5-hydroxyuridine (ho5U) modification at position 34 in tRNAs. This Burkholderia vietnamiensis (strain G4 / LMG 22486) (Burkholderia cepacia (strain R1808)) protein is tRNA uridine(34) hydroxylase.